Here is a 959-residue protein sequence, read N- to C-terminus: MVAAPCARRLARRSHSALLAALTVLLLQTLVVWNFSSLDSGAGERRGGAAVGGGEQPPPAPAPRRERRDLPAEPAAARGGGGGGGGGGGGRGPQARARGGGPGEPRGQQPASRGALPARALDPHPSPLITLETQDGYFSHRPKEKVRTDSNNENSVPKDFENVDNSNFAPRTQKQKHQPELAKKPPSRQKELLKRKLEQQEKGKGHTFPGKGPGEVLPPGDRAAANSSHGKDVSRPPHARKTGGSSPETKYDQPPKCDISGKEAISALSRAKSKHCRQEIGETYCRHKLGLLMPEKVTRFCPLEGKANKNVQWDEDSVEYMPANPVRIAFVLVVHGRASRQLQRMFKAIYHKDHFYYIHVDKRSNYLHRQVLQVSRQYSNVRVTPWRMATIWGGASLLSTYLQSMRDLLEMTDWPWDFFINLSAADYPIRTNDQLVAFLSRYRDMNFLKSHGRDNARFIRKQGLDRLFLECDAHMWRLGDRRIPEGIAVDGGSDWFLLNRRFVEYVTFSTDDLVTKMKQFYSYTLLPAESFFHTVLENSPHCDTMVDNNLRITNWNRKLGCKCQYKHIVDWCGCSPNDFKPQDFHRFQQTARPTFFARKFEAVVNQEIIGQLDYYLYGNYPAGTPGLRSYWENVYDEPDGIHSLSDVTLTLYHSFARLGLRRAETSLHTDGENSCRYYPMGHPASVHLYFLADRFQGFLIKHHATNLAVSKLETLETWVMPKKVFKIASPPSDFGRLQFSEVGTDWDAKERLFRNFGGLLGPMDEPVGMQKWGKGPNVTVTVIWVDPVNVIAATYDILIESTAEFTHYKPPLNLPLRPGVWTVKILHHWVPVAETKFLVAPLTFSNRQPIKPEEALKLHNGPLRNAYMEQSFQSLNPVLSLPINPAQVEQARRNAASTGTALEGWLDSLVGGMWTAMDICATGPTACPVMQTCSQTAWSSFSPDPKSELGAVKPDGRLR.

The Cytoplasmic segment spans residues 1–17 (MVAAPCARRLARRSHSA). The helical; Signal-anchor for type II membrane protein transmembrane segment at 18 to 38 (LLAALTVLLLQTLVVWNFSSL) threads the bilayer. Over 39 to 959 (DSGAGERRGG…GAVKPDGRLR (921 aa)) the chain is Lumenal. Residues 42-259 (AGERRGGAAV…KYDQPPKCDI (218 aa)) form a disordered region. Gly residues predominate over residues 78-104 (RGGGGGGGGGGGGRGPQARARGGGPGE). The segment covering 145–161 (KVRTDSNNENSVPKDFE) has biased composition (basic and acidic residues). Residues 163-172 (VDNSNFAPRT) show a composition bias toward polar residues. The segment covering 177 to 204 (HQPELAKKPPSRQKELLKRKLEQQEKGK) has biased composition (basic and acidic residues). The N-linked (GlcNAc...) asparagine glycan is linked to Asn226. Basic and acidic residues predominate over residues 249–259 (TKYDQPPKCDI). 4 cysteine pairs are disulfide-bonded: Cys257–Cys285, Cys301–Cys542, Cys561–Cys574, and Cys563–Cys572. UDP-alpha-D-xylose is bound by residues Val333, Asp361, and 390–392 (TIW). Asn421 carries an N-linked (GlcNAc...) asparagine glycan. 494–495 (DW) is a UDP-alpha-D-xylose binding site. Residues Ser575 and 598–599 (RK) contribute to the UDP-alpha-D-xylose site. Disulfide bonds link Cys675/Cys927 and Cys920/Cys933. A glycan (N-linked (GlcNAc...) asparagine) is linked at Asn777. Residues 940–959 (SFSPDPKSELGAVKPDGRLR) are disordered.

The protein belongs to the glycosyltransferase 14 family. XylT subfamily. As to quaternary structure, monomer. A divalent metal cation serves as cofactor. Post-translationally, contains 7 disulfide bonds. N-glycosylated. Widely expressed. Expressed at higher level in placenta, kidney and pancreas. Weakly expressed in skeletal muscle.

Its subcellular location is the golgi apparatus membrane. The protein resides in the secreted. The catalysed reaction is UDP-alpha-D-xylose + L-seryl-[protein] = 3-O-(beta-D-xylosyl)-L-seryl-[protein] + UDP + H(+). It functions in the pathway glycan metabolism; chondroitin sulfate biosynthesis. The protein operates within glycan metabolism; heparan sulfate biosynthesis. Catalyzes the first step in the biosynthesis of chondroitin sulfate and dermatan sulfate proteoglycans, such as DCN. Transfers D-xylose from UDP-D-xylose to specific serine residues of the core protein. Required for normal embryonic and postnatal skeleton development, especially of the long bones. Required for normal maturation of chondrocytes during bone development, and normal onset of ossification. The protein is Xylosyltransferase 1 (XYLT1) of Homo sapiens (Human).